Consider the following 354-residue polypeptide: Muscleblind-like protein 3 (354 aa).

4 C3H1-type zinc fingers span residues 14–42 (WLTLEVCREFQRGTCSRADADCKFAHPPR), 48–74 (NGRVVACFDSLKGRCTRENCKYLHPPP), 174–202 (SDKLEVCREFQRGNCTRGENDCRYAHPTD), and 210–236 (DNTVTICMDYIKGRCSREKCKYFHPPA).

It belongs to the muscleblind family. In terms of tissue distribution, highly expressed in the placenta.

The protein resides in the nucleus. It localises to the cytoplasm. In terms of biological role, mediates pre-mRNA alternative splicing regulation. Acts either as activator or repressor of splicing on specific pre-mRNA targets. Inhibits cardiac troponin-T (TNNT2) pre-mRNA exon inclusion but induces insulin receptor (IR) pre-mRNA exon inclusion in muscle. Antagonizes the alternative splicing activity pattern of CELF proteins. May play a role in myotonic dystrophy pathophysiology (DM). Could inhibit terminal muscle differentiation, acting at approximately the time of myogenin induction. The chain is Muscleblind-like protein 3 (MBNL3) from Homo sapiens (Human).